The following is a 331-amino-acid chain: Probable endo-beta-1,4-glucanase B (331 aa).

The first 18 residues, 1 to 18 (MKFQSTLLLAAAAGSALA), serve as a signal peptide directing secretion. Residues N38 and N100 are each glycosylated (N-linked (GlcNAc...) asparagine). E160 functions as the Proton donor in the catalytic mechanism. N-linked (GlcNAc...) asparagine glycosylation is present at N211. Residue E266 is the Nucleophile of the active site. N288 is a glycosylation site (N-linked (GlcNAc...) asparagine).

Belongs to the glycosyl hydrolase 5 (cellulase A) family.

It is found in the secreted. It catalyses the reaction Endohydrolysis of (1-&gt;4)-beta-D-glucosidic linkages in cellulose, lichenin and cereal beta-D-glucans.. Functionally, has endoglucanase activity on substrates containing beta-1,4 glycosidic bonds, like in carboxymethylcellulose (CMC), hydroxyethylcellulose (HEC) and beta-glucan. Involved in the degradation of complex natural cellulosic substrates. This Aspergillus niger (strain ATCC MYA-4892 / CBS 513.88 / FGSC A1513) protein is Probable endo-beta-1,4-glucanase B (eglB).